Reading from the N-terminus, the 2353-residue chain is Otogelin-like protein (2353 aa).

Positions 1-31 (MNIVRKLNLMIPWSIFLLHVLLFSLQEYICA) are cleaved as a signal peptide. The VWFD 1 domain maps to 121 to 297 (GICKTWGQYH…VQTPDDTKCV (177 aa)). 2 cysteine pairs are disulfide-bonded: Cys-123/Cys-257 and Cys-145/Cys-296. Asn-144 is a glycosylation site (N-linked (GlcNAc...) asparagine). Residues 390–443 (CDDSFVHRDCISCCPPTCTFEKQCLGSNLHCLDGCYCPDGLVMDNGTCISLENC) form the TIL 1 domain. Residues Asn-434 and Asn-473 are each glycosylated (N-linked (GlcNAc...) asparagine). Residues 481 to 654 (VQCSVVGDSH…NAWRVSSTCF (174 aa)) enclose the VWFD 2 domain. Disulfide bonds link Cys-483/Cys-618, Cys-505/Cys-653, and Cys-527/Cys-535. One can recognise a TIL 2 domain in the interval 745–800 (CQKGMLYHHCSSFCLHSCISLSSPEQCSDDCAEGCNCPEGKFYEDTLNFCVPIFHC). N-linked (GlcNAc...) asparagine glycosylation is found at Asn-826 and Asn-876. The 170-residue stretch at 946–1115 (AVCTIYGDRH…SWALGQCESP (170 aa)) folds into the VWFD 3 domain. 2 disulfide bridges follow: Cys-948–Cys-1078 and Cys-992–Cys-999. 3 N-linked (GlcNAc...) asparagine glycosylation sites follow: Asn-1289, Asn-1604, and Asn-2198. The 190-residue stretch at 1534-1723 (CRCSMLSELS…SWEIEKSFEV (190 aa)) folds into the VWFD 4 domain. The cysteines at positions 1536 and 1683 are disulfide-linked. Disulfide bonds link Cys-2261/Cys-2317, Cys-2282/Cys-2331, Cys-2293/Cys-2348, and Cys-2297/Cys-2350. The CTCK domain occupies 2261-2353 (CKREERICQK…EPIDCTCQWN (93 aa)).

This sequence belongs to the otogelin family. Expressed at high levels in fetal inner ear and heart. Low levels in fetal skeletal muscle, kidney, spleen and colon. Not detected in fetal liver, lung, brain, nor in fetal stomach. In adult tissues, highest levels in brain, kidney, heart and retina. Relatively low levels in lung, spleen and duodenum. Not detected in adult skeletal muscle, liver, nor testis.

The protein localises to the secreted. In Homo sapiens (Human), this protein is Otogelin-like protein (OTOGL).